The primary structure comprises 432 residues: UDP-N-acetylglucosamine 1-carboxyvinyltransferase (432 aa).

22-23 (KN) provides a ligand contact to phosphoenolpyruvate. Arginine 101 is a binding site for UDP-N-acetyl-alpha-D-glucosamine. Cysteine 125 (proton donor) is an active-site residue. At cysteine 125 the chain carries 2-(S-cysteinyl)pyruvic acid O-phosphothioketal. UDP-N-acetyl-alpha-D-glucosamine contacts are provided by residues 130–134 (RPVDL), aspartate 315, and isoleucine 337.

Belongs to the EPSP synthase family. MurA subfamily.

The protein localises to the cytoplasm. The enzyme catalyses phosphoenolpyruvate + UDP-N-acetyl-alpha-D-glucosamine = UDP-N-acetyl-3-O-(1-carboxyvinyl)-alpha-D-glucosamine + phosphate. The protein operates within cell wall biogenesis; peptidoglycan biosynthesis. Its function is as follows. Cell wall formation. Adds enolpyruvyl to UDP-N-acetylglucosamine. The polypeptide is UDP-N-acetylglucosamine 1-carboxyvinyltransferase (Paramagnetospirillum magneticum (strain ATCC 700264 / AMB-1) (Magnetospirillum magneticum)).